Reading from the N-terminus, the 514-residue chain is RNA-splicing ligase RtcB homolog (514 aa).

Mn(2+) is bound by residues Asp128, Cys131, His236, His268, and His362. 235 to 239 (NHYAE) is a GMP binding site. Residues 362 to 363 (HN), 411 to 414 (GGTM), Ser418, 437 to 440 (HGAG), and Lys513 contribute to the GMP site. His437 acts as the GMP-histidine intermediate in catalysis.

Belongs to the RtcB family. Catalytic component of the tRNA-splicing ligase complex. The cofactor is Mn(2+).

It catalyses the reaction a 3'-end 3'-phospho-ribonucleotide-RNA + a 5'-end dephospho-ribonucleoside-RNA + GTP = a ribonucleotidyl-ribonucleotide-RNA + GMP + diphosphate. The catalysed reaction is a 3'-end 2',3'-cyclophospho-ribonucleotide-RNA + a 5'-end dephospho-ribonucleoside-RNA + GTP + H2O = a ribonucleotidyl-ribonucleotide-RNA + GMP + diphosphate + H(+). Its function is as follows. Catalytic subunit of the tRNA-splicing ligase complex that acts by directly joining spliced tRNA halves to mature-sized tRNAs by incorporating the precursor-derived splice junction phosphate into the mature tRNA as a canonical 3',5'-phosphodiester. May act as an RNA ligase with broad substrate specificity, and may function toward other RNAs. This chain is RNA-splicing ligase RtcB homolog, found in Ostreococcus lucimarinus (strain CCE9901).